Consider the following 232-residue polypeptide: 2-C-methyl-D-erythritol 4-phosphate cytidylyltransferase (232 aa).

This sequence belongs to the IspD/TarI cytidylyltransferase family. IspD subfamily.

The catalysed reaction is 2-C-methyl-D-erythritol 4-phosphate + CTP + H(+) = 4-CDP-2-C-methyl-D-erythritol + diphosphate. It participates in isoprenoid biosynthesis; isopentenyl diphosphate biosynthesis via DXP pathway; isopentenyl diphosphate from 1-deoxy-D-xylulose 5-phosphate: step 2/6. In terms of biological role, catalyzes the formation of 4-diphosphocytidyl-2-C-methyl-D-erythritol from CTP and 2-C-methyl-D-erythritol 4-phosphate (MEP). The chain is 2-C-methyl-D-erythritol 4-phosphate cytidylyltransferase from Geobacter metallireducens (strain ATCC 53774 / DSM 7210 / GS-15).